The primary structure comprises 34 residues: Photosystem II reaction center protein Psb30 (34 aa).

Residues 5 to 25 (VLFQLTALIFVVAAGPLVIVL) form a helical membrane-spanning segment.

Belongs to the Psb30/Ycf12 family. As to quaternary structure, PSII is composed of 1 copy each of membrane proteins PsbA, PsbB, PsbC, PsbD, PsbE, PsbF, PsbH, PsbI, PsbJ, PsbK, PsbL, PsbM, PsbT, PsbX, PsbY, PsbZ, Psb30/Ycf12, peripheral proteins of the oxygen-evolving complex and a large number of cofactors. It forms dimeric complexes.

It localises to the plastid. The protein resides in the chloroplast thylakoid membrane. Its function is as follows. A core subunit of photosystem II (PSII), probably helps stabilize the reaction center. The chain is Photosystem II reaction center protein Psb30 from Tupiella akineta (Green alga).